The primary structure comprises 284 residues: Nucleotide-binding protein CPS_4546 (284 aa).

8-15 contributes to the ATP binding site; sequence GRSGSGKS. 56-59 provides a ligand contact to GTP; it reads DVRN.

This sequence belongs to the RapZ-like family.

Functionally, displays ATPase and GTPase activities. The chain is Nucleotide-binding protein CPS_4546 from Colwellia psychrerythraea (strain 34H / ATCC BAA-681) (Vibrio psychroerythus).